Here is a 1252-residue protein sequence, read N- to C-terminus: Putative late blight resistance protein homolog R1B-11 (1252 aa).

Residues 543–566 (RYSDSLAFLKNQLQVIQTEFESLQ) adopt a coiled-coil conformation. 2 NB-ARC domains span residues 684 to 736 (SVRR…RSRI) and 786 to 830 (SYHV…SSEG). 7 LRR repeats span residues 955 to 980 (FKFL…PYLR), 998 to 1026 (LWNL…VWDM), 1077 to 1100 (LKHL…KVSS), 1103 to 1125 (FPKL…ADDA), 1126 to 1149 (FPNL…CFTD), 1187 to 1212 (LVII…RLSS), and 1213 to 1236 (LPGI…DVDA). Positions 1188–1252 (VIIKKLVLKF…VGKLNKRDML (65 aa)) constitute an HMA domain.

This sequence belongs to the disease resistance NB-LRR family.

It localises to the cytoplasm. The protein resides in the membrane. Functionally, confers resistance to late blight (Phytophthora infestans) races carrying the avirulence gene Avr1. Resistance proteins guard the plant against pathogens that contain an appropriate avirulence protein via an indirect interaction with this avirulence protein. That triggers a defense system including the hypersensitive response, which restricts the pathogen growth. The polypeptide is Putative late blight resistance protein homolog R1B-11 (R1B-11) (Solanum demissum (Wild potato)).